The chain runs to 160 residues: MPQITLVFISLSGNTLSFVKRLSLYLADNYDYHVKQINIKDLKHETFPVKEEFVAILPTYLEGGNGVDSGEAEILTTPLGEFIAAHGNAQRCLGIIGSGNKNFNHQYCLTAKQYAKRFGFPLLGDFELRGTPDDISRLAQVIMEASSRHSSNDTQTLPNS.

It belongs to the NrdI family.

In Streptococcus pyogenes serotype M3 (strain ATCC BAA-595 / MGAS315), this protein is Putative NrdI-like protein.